The chain runs to 517 residues: BTB/POZ domain-containing protein At3g49900 (517 aa).

The segment covering 28-37 (SSSSSSLSLS) has biased composition (low complexity). A disordered region spans residues 28–49 (SSSSSSLSLSPKQPINLSSSPS). Residues 38 to 49 (PKQPINLSSSPS) show a composition bias toward polar residues. The region spanning 67–130 (PDVFVNVGGT…CYGAHIELTP (64 aa)) is the BTB domain. In terms of domain architecture, NPH3 spans 224 to 307 (LPAGDFNVVA…VRAMLQEQLN (84 aa)). Residues 409-456 (ARSASFHCVHQPSNVNKTQRGDRGSVSNLSTTYRRRRASPPQAQPQKS) are disordered.

It belongs to the NPH3 family.

It functions in the pathway protein modification; protein ubiquitination. Functionally, may act as a substrate-specific adapter of an E3 ubiquitin-protein ligase complex (CUL3-RBX1-BTB) which mediates the ubiquitination and subsequent proteasomal degradation of target proteins. The chain is BTB/POZ domain-containing protein At3g49900 from Arabidopsis thaliana (Mouse-ear cress).